The sequence spans 113 residues: 4-cresol dehydrogenase [hydroxylating] cytochrome c subunit (113 aa).

An N-terminal signal peptide occupies residues 1 to 33; that stretch reads MTFPFSGAAVKRMLVTGVVLPFGLLVAAGQAQA. Positions 48, 51, 52, and 83 each coordinate heme c.

Tetramer of two cytochrome subunits and two flavoprotein subunits. In terms of processing, binds 1 heme c group covalently per subunit.

The protein operates within aromatic compound metabolism; p-cresol degradation. In terms of biological role, this is the heme-containing component of the p-cresol methylhydroxylase. It accepts electrons from the flavoprotein subunit. The sequence is that of 4-cresol dehydrogenase [hydroxylating] cytochrome c subunit (pchC) from Pseudomonas putida (Arthrobacter siderocapsulatus).